The sequence spans 127 residues: Glycine cleavage system H protein (127 aa).

Positions 24 to 106 constitute a Lipoyl-binding domain; it reads TVTVGITDHA…FEGAWIAKIK (83 aa). Position 65 is an N6-lipoyllysine (Lys65).

This sequence belongs to the GcvH family. The glycine cleavage system is composed of four proteins: P, T, L and H. (R)-lipoate is required as a cofactor.

Functionally, the glycine cleavage system catalyzes the degradation of glycine. The H protein shuttles the methylamine group of glycine from the P protein to the T protein. The polypeptide is Glycine cleavage system H protein (Marinomonas sp. (strain MWYL1)).